Here is a 579-residue protein sequence, read N- to C-terminus: Nuclear hormone receptor family member nhr-22 (579 aa).

The nuclear receptor DNA-binding region spans 93–173 (SRSCHVCSSP…AGMRRELVQA (81 aa)). 2 consecutive NR C4-type zinc fingers follow at residues 96–117 (CHVC…CKAC) and 133–161 (CIGT…FIKC). Over residues 233–242 (LSPDPSSSQP) the composition is skewed to low complexity. Positions 233–256 (LSPDPSSSQPLDMTVTPPPLHRST) are disordered. Positions 304-577 (EVENKIFELV…SIMYDLLSFR (274 aa)) constitute an NR LBD domain.

This sequence belongs to the nuclear hormone receptor family.

It localises to the nucleus. In terms of biological role, orphan nuclear receptor. The chain is Nuclear hormone receptor family member nhr-22 (nhr-22) from Caenorhabditis elegans.